The following is a 209-amino-acid chain: Large ribosomal subunit protein bL25 (209 aa).

2 disordered regions span residues 1-20 (MSKS…KGSS) and 190-209 (LDVS…TQTS). Residues 8 to 20 (KAEKRERVGKGSS) show a composition bias toward basic and acidic residues. Positions 192–209 (VSDETSEQEKDEGETQTS) are enriched in acidic residues.

It belongs to the bacterial ribosomal protein bL25 family. CTC subfamily. Part of the 50S ribosomal subunit; part of the 5S rRNA/L5/L18/L25 subcomplex. Contacts the 5S rRNA. Binds to the 5S rRNA independently of L5 and L18.

Functionally, this is one of the proteins that binds to the 5S RNA in the ribosome where it forms part of the central protuberance. The protein is Large ribosomal subunit protein bL25 of Bartonella tribocorum (strain CIP 105476 / IBS 506).